Here is a 97-residue protein sequence, read N- to C-terminus: Large ribosomal subunit protein eL21 (97 aa).

The segment covering 1 to 24 (MVQKPHSFRRKTRKKLRKHPRRRG) has biased composition (basic residues). Positions 1–25 (MVQKPHSFRRKTRKKLRKHPRRRGL) are disordered.

This sequence belongs to the eukaryotic ribosomal protein eL21 family.

The sequence is that of Large ribosomal subunit protein eL21 (rpl21e) from Pyrococcus horikoshii (strain ATCC 700860 / DSM 12428 / JCM 9974 / NBRC 100139 / OT-3).